The chain runs to 333 residues: DNA-directed RNA polymerase subunit alpha (333 aa).

Residues 1–246 (MKKMVQIKYK…AHLQVIGDVK (246 aa)) are alpha N-terminal domain (alpha-NTD). Positions 262–333 (VEPSIHSVDI…YNVTLNRGEK (72 aa)) are alpha C-terminal domain (alpha-CTD).

Belongs to the RNA polymerase alpha chain family. As to quaternary structure, homodimer. The RNAP catalytic core consists of 2 alpha, 1 beta, 1 beta' and 1 omega subunit. When a sigma factor is associated with the core the holoenzyme is formed, which can initiate transcription.

The enzyme catalyses RNA(n) + a ribonucleoside 5'-triphosphate = RNA(n+1) + diphosphate. DNA-dependent RNA polymerase catalyzes the transcription of DNA into RNA using the four ribonucleoside triphosphates as substrates. The sequence is that of DNA-directed RNA polymerase subunit alpha from Mycoplasmopsis pulmonis (strain UAB CTIP) (Mycoplasma pulmonis).